Reading from the N-terminus, the 331-residue chain is GTP 3',8-cyclase (331 aa).

Positions 1–231 (MNAVDYLRIS…DGQVQGNGPA (231 aa)) constitute a Radical SAM core domain. Residue Arg-8 participates in GTP binding. The [4Fe-4S] cluster site is built by Cys-15 and Cys-19. Tyr-21 provides a ligand contact to S-adenosyl-L-methionine. Cys-22 lines the [4Fe-4S] cluster pocket. Arg-60 contacts GTP. Gly-64 serves as a coordination point for S-adenosyl-L-methionine. Thr-91 is a binding site for GTP. Ser-115 is a binding site for S-adenosyl-L-methionine. Lys-157 contacts GTP. Met-191 is a binding site for S-adenosyl-L-methionine. Residues Cys-254 and Cys-257 each coordinate [4Fe-4S] cluster. 259-261 (RMR) lines the GTP pocket. Position 271 (Cys-271) interacts with [4Fe-4S] cluster.

Belongs to the radical SAM superfamily. MoaA family. As to quaternary structure, monomer and homodimer. It depends on [4Fe-4S] cluster as a cofactor.

It catalyses the reaction GTP + AH2 + S-adenosyl-L-methionine = (8S)-3',8-cyclo-7,8-dihydroguanosine 5'-triphosphate + 5'-deoxyadenosine + L-methionine + A + H(+). It participates in cofactor biosynthesis; molybdopterin biosynthesis. Catalyzes the cyclization of GTP to (8S)-3',8-cyclo-7,8-dihydroguanosine 5'-triphosphate. The sequence is that of GTP 3',8-cyclase from Acaryochloris marina (strain MBIC 11017).